Consider the following 330-residue polypeptide: Probable integrase/recombinase protein MJ0367 (330 aa).

In terms of domain architecture, Core-binding (CB) spans 22 to 112 (IEETDKIKEY…LLKVFYRVLR (91 aa)). One can recognise a Tyr recombinase domain in the interval 136 to 325 (QHYDAVDAEM…RAESLEFIKK (190 aa)). Residues Arg177, Lys202, His275, Arg278, and His301 contribute to the active site. Tyr310 acts as the O-(3'-phospho-DNA)-tyrosine intermediate in catalysis.

Belongs to the 'phage' integrase family.

The polypeptide is Probable integrase/recombinase protein MJ0367 (Methanocaldococcus jannaschii (strain ATCC 43067 / DSM 2661 / JAL-1 / JCM 10045 / NBRC 100440) (Methanococcus jannaschii)).